The chain runs to 180 residues: uncharacterized protein (180 aa).

The first 24 residues, 1-24, serve as a signal peptide directing secretion; it reads MKKKTIFQCVILFFSILNIHVGMA.

In terms of biological role, part of the elfADCG-ycbUVF fimbrial operon, which promotes adhesion of bacteria to different abiotic surfaces. This is an uncharacterized protein from Escherichia coli (strain K12).